The primary structure comprises 873 residues: Potassium voltage-gated channel subfamily KQT member 3 (873 aa).

Positions 1 to 41 (MGLKARRAAGAAGGGGGEGGGGGGGAANPAGGDSAVAGDEE) are disordered. Over 1–121 (MGLKARRAAG…IYDALERPRG (121 aa)) the chain is Cytoplasmic. Over residues 11–26 (AAGGGGGEGGGGGGGA) the composition is skewed to gly residues. Thr82 is subject to Phosphothreonine. A helical transmembrane segment spans residues 122-144 (WALLYHALVFLIVLGCLILAVLT). The Extracellular portion of the chain corresponds to 145–154 (TFKEYETVSG). The chain crosses the membrane as a helical span at residues 155-176 (DWLLLLETFAIFIFGAEFALRI). Topologically, residues 177 to 194 (WAAGCCCRYKGWRGRLKF) are cytoplasmic. A helical transmembrane segment spans residues 195–214 (ARKPLCMLDIFVLIASVPVV). At 215–226 (AVGNQGNVLATS) the chain is on the extracellular side. Residues 227–245 (LRSLRFLQILRMLRMDRRG) form a helical; Voltage-sensor membrane-spanning segment. A 1,2-diacyl-sn-glycero-3-phospho-(1D-myo-inositol-4,5-bisphosphate) is bound at residue Arg244. Topologically, residues 246–257 (GTWKLLGSAICA) are cytoplasmic. Residues 258–283 (HSKELITAWYIGFLTLILSSFLVYLV) form a helical membrane-spanning segment. Lys260 lines the a 1,2-diacyl-sn-glycero-3-phospho-(1D-myo-inositol-4,5-bisphosphate) pocket. Over 284–303 (EKDVPEMDAQGEEMKEEFET) the chain is Extracellular. The pore-forming intramembrane region spans 304–316 (YADALWWGLITLA). A Selectivity filter motif is present at residues 317–322 (TIGYGD). At 317-327 (TIGYGDKTPKT) the chain is on the extracellular side. A helical transmembrane segment spans residues 328-354 (WEGRLIAATFSLIGVSFFALPAGILGS). The Cytoplasmic portion of the chain corresponds to 355–873 (GLALKVQEQH…SIWTPSNKPT (519 aa)). The mediates interaction with calmodulin stretch occupies residues 357-538 (ALKVQEQHRQ…RLYKKKFKET (182 aa)). Residue Lys367 participates in a 1,2-diacyl-sn-glycero-3-phospho-(1D-myo-inositol-4,5-bisphosphate) binding. 3 disordered regions span residues 575 to 603 (PGPP…PRNE), 723 to 742 (RGGP…GSTY), and 766 to 873 (ELQG…NKPT). Polar residues-rich tracts occupy residues 588–601 (KGSA…QSPR), 725–741 (GPSS…SGST), and 844–873 (DPFT…NKPT).

This sequence belongs to the potassium channel family. KQT (TC 1.A.1.15) subfamily. Kv7.3/KCNQ3 sub-subfamily. In terms of assembly, heterotetramer with KCNQ2; forms heterotetrameric native M-channel responsible for the M-current. Interacts with calmodulin; the interaction is calcium-independent, constitutive and participates in the proper assembly of a functional M-channel. Heteromultimer with KCNQ5. May associate with KCNE2. Interacts with IQCJ-SCHIP1. Interacts (via the pore module) with SLC5A3/SMIT1; forms a coregulatory complex that alters ion selectivity, voltage dependence and gating kinetics of the channel. In terms of processing, KCNQ2/KCNQ3 are ubiquitinated by NEDD4L. Ubiquitination leads to protein degradation. Degradation induced by NEDD4L is inhibited by USP36. Expressed in dorsal root ganglion (DRG) neurons.

It is found in the cell membrane. It catalyses the reaction K(+)(in) = K(+)(out). It carries out the reaction Rb(+)(in) = Rb(+)(out). The catalysed reaction is Cs(+)(in) = Cs(+)(out). The enzyme catalyses Na(+)(in) = Na(+)(out). With respect to regulation, phosphatidylinositol-4,5-bisphosphate (PIP2) potentiates the activation of KCNQ channels by enhancing the electro-mechanical coupling of the voltage-sensing domain (VSD) and the pore-forming domain (PD). In the closed state of the channel, PIP2 is anchored at the S2-S3 loop; upon channel activation, PIP2 interacts with the S4-S5 linker and is involved in channel gating. Calcium suppresses KCNQ2-KCNQ3 channel currents, with calcium-bound calmodulin inducing a change in channel configuration which leads to the reduction of channel affinity for PIP2 and subsequent current suppression. Pore-forming subunit of the voltage-gated potassium (Kv) M-channel which is responsible for the M-current, a key controller of neuronal excitability. M-channel is composed of pore-forming subunits KCNQ2 and KCNQ3 assembled as heterotetramers. The native M-current has a slowly activating and deactivating potassium conductance which plays a critical role in determining the subthreshold electrical excitability of neurons as well as the responsiveness to synaptic inputs. M-channel is selectively permeable in vitro to other cations besides potassium, in decreasing order of affinity K(+) &gt; Rb(+) &gt; Cs(+) &gt; Na(+). M-channel association with SLC5A3/SMIT1 alters channel ion selectivity, increasing Na(+) and Cs(+) permeation relative to K(+). Suppressed by activation of M1 muscarinic acetylcholine receptors. KCNQ3 also associates with KCNQ5 to form a functional channel in vitro and may also contribute to the M-current in brain. This is Potassium voltage-gated channel subfamily KQT member 3 from Mus musculus (Mouse).